The chain runs to 551 residues: Adenine deaminase (551 aa).

Belongs to the metallo-dependent hydrolases superfamily. Adenine deaminase family. The cofactor is Mn(2+).

It carries out the reaction adenine + H2O + H(+) = hypoxanthine + NH4(+). The sequence is that of Adenine deaminase from Leuconostoc mesenteroides subsp. mesenteroides (strain ATCC 8293 / DSM 20343 / BCRC 11652 / CCM 1803 / JCM 6124 / NCDO 523 / NBRC 100496 / NCIMB 8023 / NCTC 12954 / NRRL B-1118 / 37Y).